Reading from the N-terminus, the 397-residue chain is Polyphosphatase (397 aa).

Mg(2+) is bound by residues Asp41, Asp127, and His148. The Mn(2+) site is built by Asp41, Asp127, and His148. His149, Ser286, and Arg381 together coordinate ATP.

Belongs to the PPase class C family. The cofactor is Mn(2+). Mg(2+) serves as cofactor.

It carries out the reaction [phosphate](n) + H2O = [phosphate](n-1) + phosphate + H(+). Polyphosphatase (polyPase) involved in the degradation of inorganic polyphosphates (polyP) that is able to degrade a range of chains from three to several hundreds of residues in a highly processive manner. Exclusively shows exopolyphosphatase activity, cleaving inside the polyP chain. In Saccharomyces cerevisiae (strain ATCC 204508 / S288c) (Baker's yeast), this protein is Polyphosphatase.